The following is a 128-amino-acid chain: uncharacterized protein (128 aa).

2 disordered regions span residues 62-83 (LNPS…SPRV) and 101-128 (FAAS…RYQP). Over residues 101–114 (FAASSSSTAPVTVT) the composition is skewed to low complexity.

Its subcellular location is the cytoplasm. It is found in the nucleus. This is an uncharacterized protein from Saccharomyces cerevisiae (strain ATCC 204508 / S288c) (Baker's yeast).